A 196-amino-acid polypeptide reads, in one-letter code: dCTP deaminase, dUMP-forming (196 aa).

Residues 101-106 (KSSLGR), aspartate 119, 127-129 (TLE), glutamine 148, tyrosine 162, and glutamine 174 contribute to the dCTP site. Glutamate 129 (proton donor/acceptor) is an active-site residue.

The protein belongs to the dCTP deaminase family. As to quaternary structure, homotrimer.

It carries out the reaction dCTP + 2 H2O = dUMP + NH4(+) + diphosphate. The protein operates within pyrimidine metabolism; dUMP biosynthesis; dUMP from dCTP: step 1/1. Functionally, bifunctional enzyme that catalyzes both the deamination of dCTP to dUTP and the hydrolysis of dUTP to dUMP without releasing the toxic dUTP intermediate. The sequence is that of dCTP deaminase, dUMP-forming from Thermobifida fusca (strain YX).